Consider the following 779-residue polypeptide: Kazrin (779 aa).

Residues 79–261 (AQVLLREEVV…LATLTKDVPK (183 aa)) are a coiled coil. Residues 295 to 366 (QQTLYHSHPP…PGPVQKSLHN (72 aa)) form a disordered region. Ser-356, Ser-371, and Ser-391 each carry phosphoserine. The disordered stretch occupies residues 403–429 (KSLDPGLFDDSDSQCSPTRHSLSLSEG). The segment covering 415–426 (SQCSPTRHSLSL) has biased composition (polar residues). 3 SAM domains span residues 450 to 515 (WKAG…YRDA), 528 to 592 (DHHW…LYQV), and 616 to 683 (WTNQ…STIF). Positions 685–779 (PSNSTGIRES…GYGSLEVTNV (95 aa)) are disordered. Residues 736–746 (SSKEPDFHDDY) are compositionally biased toward basic and acidic residues.

This sequence belongs to the kazrin family. In terms of tissue distribution, expressed in skin interfollicular epidermis and hair follicles. Expressed in tongue epithelium basal suprabasal layers.

The protein localises to the cell junction. The protein resides in the nucleus. It localises to the cytoplasm. It is found in the cytoskeleton. Functionally, component of the cornified envelope of keratinocytes. May be involved in the interplay between adherens junctions and desmosomes. The function in the nucleus is not known. The sequence is that of Kazrin (Kazn) from Mus musculus (Mouse).